The chain runs to 278 residues: MRADPASAAADIFEANRARGAVRFDVRLQDGMTRRHHLHESGSLRVRFPSPEDDGLSAMFVNTAGGIAGGDRFAVEVAAGEGSRVTLSSAAAEKVYRAPGKPAELDIALTAAAGAHIAWLPQETILFDRARIHRRIDIDLAATASLLLCEIVVFGRTAMGERMREGEFVDRWRLRRGGRLVFAETVRLDGDIGGKLAHPAIANGAAAIGTALIVPGDAALVERIRESLPAFRGEAGLSAWNGFAMARFCAQDAASLRADMMAVLGCASAVPLPRLWLN.

The protein belongs to the UreD family. In terms of assembly, ureD, UreF and UreG form a complex that acts as a GTP-hydrolysis-dependent molecular chaperone, activating the urease apoprotein by helping to assemble the nickel containing metallocenter of UreC. The UreE protein probably delivers the nickel.

It localises to the cytoplasm. Functionally, required for maturation of urease via the functional incorporation of the urease nickel metallocenter. The chain is Urease accessory protein UreD 3 from Bradyrhizobium sp. (strain BTAi1 / ATCC BAA-1182).